The primary structure comprises 236 residues: Mammalian ependymin-related protein 1 (236 aa).

An N-terminal signal peptide occupies residues 1-35 (MPRRAPLRVARGSLDAWLLGGLWVCALGCLCGVGM). 3 disulfide bridges follow: cysteine 54-cysteine 184, cysteine 100-cysteine 234, and cysteine 125-cysteine 222. Residues asparagine 142 and asparagine 194 are each glycosylated (N-linked (GlcNAc...) asparagine).

Belongs to the ependymin family. As to quaternary structure, homodimer. Post-translationally, N-glycosylated; the glycan contains mannose-6-phosphate moieties.

The protein resides in the lysosome lumen. Its subcellular location is the secreted. Its function is as follows. Binds anionic lipids and gangliosides at acidic pH. The polypeptide is Mammalian ependymin-related protein 1 (EPDR1) (Bos taurus (Bovine)).